A 538-amino-acid chain; its full sequence is CTP synthase (538 aa).

The amidoligase domain stretch occupies residues 1–267 (MDRAKFIFVT…LTPIARRFNL (267 aa)). Residue Ser15 coordinates CTP. UTP is bound at residue Ser15. ATP-binding positions include 16–21 (SLGKGI) and Asp73. Positions 73 and 141 each coordinate Mg(2+). Residues 148 to 150 (DME), 188 to 193 (KTKPTQ), and Lys224 contribute to the CTP site. Residues 188-193 (KTKPTQ) and Lys224 each bind UTP. The region spanning 292-538 (KIGFVGKYLS…DFIKSALSKS (247 aa)) is the Glutamine amidotransferase type-1 domain. An L-glutamine-binding site is contributed by Gly351. Cys378 serves as the catalytic Nucleophile; for glutamine hydrolysis. L-glutamine is bound by residues 379 to 382 (LGMQ), Glu402, and Arg469. Residues His513 and Glu515 contribute to the active site.

The protein belongs to the CTP synthase family. Homotetramer.

It catalyses the reaction UTP + L-glutamine + ATP + H2O = CTP + L-glutamate + ADP + phosphate + 2 H(+). It carries out the reaction L-glutamine + H2O = L-glutamate + NH4(+). The catalysed reaction is UTP + NH4(+) + ATP = CTP + ADP + phosphate + 2 H(+). The protein operates within pyrimidine metabolism; CTP biosynthesis via de novo pathway; CTP from UDP: step 2/2. With respect to regulation, allosterically activated by GTP, when glutamine is the substrate; GTP has no effect on the reaction when ammonia is the substrate. The allosteric effector GTP functions by stabilizing the protein conformation that binds the tetrahedral intermediate(s) formed during glutamine hydrolysis. Inhibited by the product CTP, via allosteric rather than competitive inhibition. Its function is as follows. Catalyzes the ATP-dependent amination of UTP to CTP with either L-glutamine or ammonia as the source of nitrogen. Regulates intracellular CTP levels through interactions with the four ribonucleotide triphosphates. This chain is CTP synthase, found in Helicobacter pylori (strain HPAG1).